A 415-amino-acid chain; its full sequence is Mitogen-activated protein kinase kinae MST7 (415 aa).

The segment at 1 to 37 (MADPFAPRTMKRRNVKGLALTPAAPKPPPTAENAPIH) is disordered. The Protein kinase domain maps to 61–326 (LEVIKDLGSG…EELFERDPFV (266 aa)). ATP contacts are provided by residues 67-75 (LGSGNGGTV) and lysine 90. Positions 363-409 (DLLRSSDSPTATYHGDDRPLETPTSAYRVDPRRGPAEGSAGLADQVD) are disordered.

The protein belongs to the protein kinase superfamily. STE Ser/Thr protein kinase family. MAP kinase kinase subfamily. Homodimer. Interacts with the adapter protein MST50. Interacts with TRX2.

The catalysed reaction is L-seryl-[protein] + ATP = O-phospho-L-seryl-[protein] + ADP + H(+). The enzyme catalyses L-threonyl-[protein] + ATP = O-phospho-L-threonyl-[protein] + ADP + H(+). Its function is as follows. Mitogen-activated protein kinase kinase; part of the MST11-MST7-PMK1 MAP kinase (MAPK) cascade that is essential for appressorium formation, penetration and invasive growth. The MST11-MST7-PMK1 MAP kinase cascade transduces signals from the cell surface sensors MDB2 and SHO1 that recognize various surface signals such as surface hydrophobicity, cutin monomers, and rice leaf waxes. MST7 acts as the upstream MAPKK that directly phosphorylates MAP kinase PMK1. This is Mitogen-activated protein kinase kinae MST7 from Pyricularia oryzae (strain 70-15 / ATCC MYA-4617 / FGSC 8958) (Rice blast fungus).